The chain runs to 216 residues: MAVALWYCPPANSPCYDTVNSLILSLQTLFPDAVLFEPHVTITSQLRCDSADDAAAVLAAACAALRACRPQLDARGSPVVRFDAVAVGRRYFDKVHLACAHDRFLYGVAQVIRELFVQDPPDPAAAADWVHSSFRPHLSLVYSDLYHVDQALLRVLRQRIGDALGAALLPHPPAPGLQALWALQPPLDGWSIPGSFKVVRCEGPVRDWHVLAAADL.

His-39 serves as the catalytic Proton donor/acceptor. Residue Thr-41 coordinates substrate. His-137 serves as the catalytic Proton donor/acceptor. Residues Ser-139 and Tyr-142 each coordinate substrate.

This sequence belongs to the 2H phosphoesterase superfamily. CPD1 family.

The protein resides in the golgi apparatus. It carries out the reaction a nucleoside 2',3'-cyclic phosphate + H2O = a nucleoside 2'-phosphate + H(+). Involved in the metabolism of ADP-ribose 1',2'-cyclic phosphate which is produced as a consequence of tRNA splicing. In Eremothecium gossypii (strain ATCC 10895 / CBS 109.51 / FGSC 9923 / NRRL Y-1056) (Yeast), this protein is 2',3'-cyclic-nucleotide 3'-phosphodiesterase (CPD1).